The chain runs to 366 residues: 3-dehydroquinate synthase (366 aa).

Residues 69–74 (DGEAHK), 103–107 (GVIGD), 127–128 (TT), lysine 140, lysine 149, and 167–170 (TLNT) each bind NAD(+). Zn(2+) contacts are provided by glutamate 182, histidine 245, and histidine 262.

This sequence belongs to the sugar phosphate cyclases superfamily. Dehydroquinate synthase family. The cofactor is Co(2+). Zn(2+) serves as cofactor. NAD(+) is required as a cofactor.

The protein resides in the cytoplasm. The enzyme catalyses 7-phospho-2-dehydro-3-deoxy-D-arabino-heptonate = 3-dehydroquinate + phosphate. The protein operates within metabolic intermediate biosynthesis; chorismate biosynthesis; chorismate from D-erythrose 4-phosphate and phosphoenolpyruvate: step 2/7. Functionally, catalyzes the conversion of 3-deoxy-D-arabino-heptulosonate 7-phosphate (DAHP) to dehydroquinate (DHQ). In Pseudomonas fluorescens (strain SBW25), this protein is 3-dehydroquinate synthase.